A 147-amino-acid chain; its full sequence is Hemoglobin subunit beta-1 (147 aa).

The region spanning 3–147 (EWTAAERRHV…VVSALGRQYH (145 aa)) is the Globin domain. The heme b site is built by H64 and H93.

This sequence belongs to the globin family. Hb 1 is a heterotetramer of two alpha-1 and two beta-1 chains. As to expression, red blood cells.

Functionally, involved in oxygen transport from gills to the various peripheral tissues. The polypeptide is Hemoglobin subunit beta-1 (hbb1) (Gadus morhua (Atlantic cod)).